Reading from the N-terminus, the 1255-residue chain is Kinesin-related protein 7 (1255 aa).

Residues 1 to 26 (MESPVVEGNSGEVATPTLPQPPTPVS) form a disordered region. The Kinesin motor domain maps to 28–349 (NIRVVCRVRP…LQFGTRAKTI (322 aa)). An ATP-binding site is contributed by 107-114 (GQTASGKT). Composition is skewed to low complexity over residues 454–491 (NNNNVDENNNTNNNDNNNNDNNNNNQYQEESNQYQQEN), 545–563 (NNNNVDDNNNGEINNDSDG), and 583–603 (HNINNNNNNNNNINNDNNSNS). Disordered stretches follow at residues 454–503 (NNNN…NSSF), 530–564 (GNISDDDDDDDDHHSNNNNVDDNNNGEINNDSDGY), 579–628 (DLND…MDVN), 661–686 (ENEQQQQQQQHNDDDEDIKSTTSNAT), 795–864 (EEGS…TKSI), and 915–934 (ISIKSNKEPSPSSSTTTSIK). Positions 608–628 (VSTSYITSSPNLSPSKSMDVN) are enriched in polar residues. Residues 813 to 834 (GDDDDEENEDNENEDVIVDSDE) show a composition bias toward acidic residues. Residues 915–932 (ISIKSNKEPSPSSSTTTS) show a composition bias toward low complexity. A helical transmembrane segment spans residues 945-965 (IIFTIILTITLVSSSLLCLYL). A coiled-coil region spans residues 1088–1223 (NYITKIDQLS…QELEDAPIAL (136 aa)).

Belongs to the TRAFAC class myosin-kinesin ATPase superfamily. Kinesin family.

It is found in the nucleus membrane. The protein resides in the cytoplasm. It localises to the cytoskeleton. In terms of biological role, microtubule-associated force-producing protein that plays a role in organelle transport. Its motor activity is directed toward the microtubule's plus end. May be involved in cell motility or cell differentiation during prestalk formation. The chain is Kinesin-related protein 7 (kif7) from Dictyostelium discoideum (Social amoeba).